Here is a 302-residue protein sequence, read N- to C-terminus: Putative S-adenosyl-L-methionine-dependent methyltransferase MMAR_1068 (302 aa).

Residues aspartate 127 and 156 to 157 contribute to the S-adenosyl-L-methionine site; that span reads DL.

This sequence belongs to the UPF0677 family.

In terms of biological role, exhibits S-adenosyl-L-methionine-dependent methyltransferase activity. This chain is Putative S-adenosyl-L-methionine-dependent methyltransferase MMAR_1068, found in Mycobacterium marinum (strain ATCC BAA-535 / M).